Reading from the N-terminus, the 1052-residue chain is Carbamoyl phosphate synthase large chain (1052 aa).

Residues 1–399 (MRENVKRVLV…ALQKAVRMLD (399 aa)) form a carboxyphosphate synthetic domain region. 12 residues coordinate ATP: Arg127, Arg167, Gly173, Gly174, Lys206, Leu208, Glu213, Gly239, Val240, His241, Gln282, and Glu296. An ATP-grasp 1 domain is found at 131-325 (RETMINVNLP…LAYVSAKLAL (195 aa)). Residues Gln282, Glu296, and Asn298 each coordinate Mg(2+). Mn(2+) is bound by residues Gln282, Glu296, and Asn298. Positions 400 to 548 (LGEPGIIGGK…VTYNGTEDDI (149 aa)) are oligomerization domain. The interval 549-930 (EFSNGIRKLL…LKSWLSSSPN (382 aa)) is carbamoyl phosphate synthetic domain. Residues 674 to 864 (SRLLDKLGIK…IIDLALTGVI (191 aa)) enclose the ATP-grasp 2 domain. 10 residues coordinate ATP: Arg710, Lys749, Ile751, Glu756, Gly780, Val781, His782, Ser783, Gln823, and Glu835. Gln823, Glu835, and Asn837 together coordinate Mg(2+). Mn(2+) contacts are provided by Gln823, Glu835, and Asn837. The region spanning 930-1052 (NRLPDQKGIA…YEIGEYGAGI (123 aa)) is the MGS-like domain. An allosteric domain region spans residues 931 to 1052 (RLPDQKGIAL…YEIGEYGAGI (122 aa)).

This sequence belongs to the CarB family. As to quaternary structure, composed of two chains; the small (or glutamine) chain promotes the hydrolysis of glutamine to ammonia, which is used by the large (or ammonia) chain to synthesize carbamoyl phosphate. Tetramer of heterodimers (alpha,beta)4. Requires Mg(2+) as cofactor. Mn(2+) is required as a cofactor.

It carries out the reaction hydrogencarbonate + L-glutamine + 2 ATP + H2O = carbamoyl phosphate + L-glutamate + 2 ADP + phosphate + 2 H(+). The catalysed reaction is hydrogencarbonate + NH4(+) + 2 ATP = carbamoyl phosphate + 2 ADP + phosphate + 2 H(+). It participates in amino-acid biosynthesis; L-arginine biosynthesis; carbamoyl phosphate from bicarbonate: step 1/1. The protein operates within pyrimidine metabolism; UMP biosynthesis via de novo pathway; (S)-dihydroorotate from bicarbonate: step 1/3. In terms of biological role, large subunit of the glutamine-dependent carbamoyl phosphate synthetase (CPSase). CPSase catalyzes the formation of carbamoyl phosphate from the ammonia moiety of glutamine, carbonate, and phosphate donated by ATP, constituting the first step of 2 biosynthetic pathways, one leading to arginine and/or urea and the other to pyrimidine nucleotides. The large subunit (synthetase) binds the substrates ammonia (free or transferred from glutamine from the small subunit), hydrogencarbonate and ATP and carries out an ATP-coupled ligase reaction, activating hydrogencarbonate by forming carboxy phosphate which reacts with ammonia to form carbamoyl phosphate. The chain is Carbamoyl phosphate synthase large chain from Sulfolobus acidocaldarius (strain ATCC 33909 / DSM 639 / JCM 8929 / NBRC 15157 / NCIMB 11770).